The following is a 558-amino-acid chain: TNF receptor-associated factor 5 (558 aa).

The RING-type zinc-finger motif lies at 45-85; the sequence is CAFCHSVLHNPHQTGCGHRFCQQCIRSLRELNSVPICPVDK. 2 TRAF-type zinc fingers span residues 127–181 and 182–239; these read DHLQ…TNLQ and DHEE…GNLL. The stretch at 252–302 forms a coiled coil; that stretch reads LVLEKNYQLEQRISDLYQSLEQKESKIQQLAETVKKFEKELKQFTQMFGRN. A Glycyl lysine isopeptide (Lys-Gly) (interchain with G-Cter in ubiquitin) cross-link involves residue K318. Residues 340-400 are a coiled coil; it reads LDLRSLVDAV…EERFKQLEGA (61 aa). Residues 345-558 are interaction with EIF2AK2/PKR; that stretch reads LVDAVDSVKQ…AVDLTDLEDL (214 aa). The 148-residue stretch at 403–550 folds into the MATH domain; it reads SGKLIWKVTD…DDTLFLKVAV (148 aa).

Belongs to the TNF receptor-associated factor family. A subfamily. As to quaternary structure, homotrimer. Heterotrimer with TRAF3. Associates with TNFRSF5/CD40 through interaction with TRAF3. Associates with LTBR/TNFRSF3, TNFRSF4, TNFRSF8/CD30, TNFRSF11A/RANK, TNFRSF13B/TACI, TNFRSF14, TNFRSF17, TNFRSF19/TROY, RIPK2, MAP3K14, MAP3K5, and TRAF and TNF receptor associated protein TDP2. Interacts (via C-terminus) with EIF2AK2/PKR (via the kinase catalytic domain). In terms of processing, ubiquitinated at Lys-318 by the SCF(FBXL2) complex, leading to its degradation by the proteasome.

The protein localises to the cytoplasm. It is found in the cytosol. In terms of biological role, adapter protein and signal transducer that links members of the tumor necrosis factor receptor family to different signaling pathways by association with the receptor cytoplasmic domain and kinases. Mediates activation of NF-kappa-B and probably JNK. Seems to be involved in apoptosis. Plays a role in mediating activation of NF-kappa-B by EIF2AK2/PKR. The chain is TNF receptor-associated factor 5 (Traf5) from Mus musculus (Mouse).